A 570-amino-acid polypeptide reads, in one-letter code: Sulfite reductase [NADPH] hemoprotein beta-component (570 aa).

Positions 434, 440, 479, and 483 each coordinate [4Fe-4S] cluster. A siroheme-binding site is contributed by Cys-483.

The protein belongs to the nitrite and sulfite reductase 4Fe-4S domain family. As to quaternary structure, alpha(8)-beta(8). The alpha component is a flavoprotein, the beta component is a hemoprotein. Requires siroheme as cofactor. The cofactor is [4Fe-4S] cluster.

The catalysed reaction is hydrogen sulfide + 3 NADP(+) + 3 H2O = sulfite + 3 NADPH + 4 H(+). It functions in the pathway sulfur metabolism; hydrogen sulfide biosynthesis; hydrogen sulfide from sulfite (NADPH route): step 1/1. Component of the sulfite reductase complex that catalyzes the 6-electron reduction of sulfite to sulfide. This is one of several activities required for the biosynthesis of L-cysteine from sulfate. The chain is Sulfite reductase [NADPH] hemoprotein beta-component from Escherichia coli O1:K1 / APEC.